Reading from the N-terminus, the 366-residue chain is 3-dehydroquinate synthase (366 aa).

NAD(+)-binding positions include 69–74 (DGEAHK), 103–107 (GVIGD), 127–128 (TT), Lys140, Lys149, and 167–170 (TLNT). Residues Glu182, His245, and His262 each contribute to the Zn(2+) site.

Belongs to the sugar phosphate cyclases superfamily. Dehydroquinate synthase family. It depends on Co(2+) as a cofactor. The cofactor is Zn(2+). Requires NAD(+) as cofactor.

It is found in the cytoplasm. The catalysed reaction is 7-phospho-2-dehydro-3-deoxy-D-arabino-heptonate = 3-dehydroquinate + phosphate. It functions in the pathway metabolic intermediate biosynthesis; chorismate biosynthesis; chorismate from D-erythrose 4-phosphate and phosphoenolpyruvate: step 2/7. Functionally, catalyzes the conversion of 3-deoxy-D-arabino-heptulosonate 7-phosphate (DAHP) to dehydroquinate (DHQ). This chain is 3-dehydroquinate synthase, found in Pseudomonas fluorescens (strain SBW25).